The following is a 186-amino-acid chain: dTTP/UTP pyrophosphatase (186 aa).

The active-site Proton acceptor is the aspartate 66.

This sequence belongs to the Maf family. YhdE subfamily. A divalent metal cation is required as a cofactor.

It is found in the cytoplasm. It carries out the reaction dTTP + H2O = dTMP + diphosphate + H(+). It catalyses the reaction UTP + H2O = UMP + diphosphate + H(+). In terms of biological role, nucleoside triphosphate pyrophosphatase that hydrolyzes dTTP and UTP. May have a dual role in cell division arrest and in preventing the incorporation of modified nucleotides into cellular nucleic acids. The sequence is that of dTTP/UTP pyrophosphatase from Pyrococcus horikoshii (strain ATCC 700860 / DSM 12428 / JCM 9974 / NBRC 100139 / OT-3).